The primary structure comprises 152 residues: MVKAVAVLNSSEGVSGTYLFTQVGVAPTTVNGNISGLKPGLHGFHVHALGDTTNGCMSTGPHYNPAGKEHGAPEDEVRHAGDLGNITVGEDGTASFTITDKQIPLTGPQSIIGRAVVVHADPDDLGKGGHELSKSTGNAGGRIACGIIGLQG.

3 residues coordinate Cu cation: His45, His47, and His62. A disulfide bridge links Cys56 with Cys145. Zn(2+)-binding residues include His62, His70, His79, and Asp82. A Cu cation-binding site is contributed by His119.

It belongs to the Cu-Zn superoxide dismutase family. Homodimer. Requires Cu cation as cofactor. The cofactor is Zn(2+).

Its subcellular location is the cytoplasm. The catalysed reaction is 2 superoxide + 2 H(+) = H2O2 + O2. Its function is as follows. Destroys radicals which are normally produced within the cells and which are toxic to biological systems. This chain is Superoxide dismutase [Cu-Zn] 1 (SODCC.1), found in Solanum lycopersicum (Tomato).